Consider the following 366-residue polypeptide: Ferredoxin--NADP reductase (366 aa).

Positions 51, 59, 64, 104, 139, 308, and 349 each coordinate FAD.

This sequence belongs to the ferredoxin--NADP reductase type 2 family. Homodimer. Requires FAD as cofactor.

It catalyses the reaction 2 reduced [2Fe-2S]-[ferredoxin] + NADP(+) + H(+) = 2 oxidized [2Fe-2S]-[ferredoxin] + NADPH. This is Ferredoxin--NADP reductase from Polaromonas naphthalenivorans (strain CJ2).